Reading from the N-terminus, the 114-residue chain is Ribonuclease U2 (114 aa).

Disulfide bonds link cysteine 1–cysteine 54, cysteine 9–cysteine 113, and cysteine 55–cysteine 96. Aspartate 29, valine 30, alanine 31, asparagine 32, aspartate 37, and tyrosine 39 together coordinate Ca(2+). Residue 39 to 49 (YPHQYYDEASE) participates in substrate binding. The active site involves histidine 41. The active-site Proton acceptor is glutamate 62. Arginine 85 is a binding site for substrate. Histidine 101 acts as the Proton donor in catalysis. 108 to 110 (DGF) serves as a coordination point for substrate.

The protein belongs to the ribonuclease U2 family.

It carries out the reaction [RNA] containing adenosine + H2O = an [RNA fragment]-3'-adenosine-3'-phosphate + a 5'-hydroxy-ribonucleotide-3'-[RNA fragment].. The catalysed reaction is [RNA] containing guanosine + H2O = an [RNA fragment]-3'-guanosine-3'-phosphate + a 5'-hydroxy-ribonucleotide-3'-[RNA fragment].. The chain is Ribonuclease U2 (RNU2) from Ustilago sphaerogena (Smut fungus).